Here is a 397-residue protein sequence, read N- to C-terminus: Purine ribonucleoside efflux pump NepI (397 aa).

Topologically, residues 1–21 (MNENIAEKFRADGVARPNWSA) are cytoplasmic. A helical membrane pass occupies residues 22 to 42 (VFAVAFCVACLITVEFLPVSL). The Periplasmic portion of the chain corresponds to 43–54 (LTPMAQDLGISE). A helical transmembrane segment spans residues 55-75 (GVAGQSVTVTAFVAMFSSLFI). The Cytoplasmic segment spans residues 76 to 85 (TQIIQATDRR). A helical transmembrane segment spans residues 86–106 (YIVILFAVLLTASCLMVSFAN). S107 is a topological domain (periplasmic). A helical transmembrane segment spans residues 108 to 128 (FTLLLLGRACLGLALGGFWAM). At 129 to 147 (SASLTMRLVPARTVPKALS) the chain is on the cytoplasmic side. Residues 148-168 (VIFGAVSIALVIAAPLGSFLG) form a helical membrane-spanning segment. Over 169 to 175 (GIIGWRN) the chain is Periplasmic. A helical transmembrane segment spans residues 176–196 (VFNAAAVMGVLCVIWVVKSLP). Over 197–215 (SLPGEPSHQKQNMFSLLQR) the chain is Cytoplasmic. Residues 216–236 (PGVMAGMIAIFMSFAGQFAFF) traverse the membrane as a helical segment. Over 237–255 (TYIRPVYMNLAGFDVDGLT) the chain is Periplasmic. A helical membrane pass occupies residues 256-276 (LVLLSFGIASFVGTSFSSYVL). At 277-281 (KRSVK) the chain is on the cytoplasmic side. Residues 282-302 (LALAGAPLLLALSALTLIVWG) traverse the membrane as a helical segment. The Periplasmic portion of the chain corresponds to 303–305 (SDK). A helical transmembrane segment spans residues 306–326 (TVAAAIAIIWGLAFALVPVGW). Topologically, residues 327–343 (STWITRSLADQAEKAGS) are cytoplasmic. The helical transmembrane segment at 344–364 (IQVAVIQLANTCGAAVGGYAL) threads the bilayer. Residues 365–366 (DN) are Periplasmic-facing. The helical transmembrane segment at 367–387 (FGLLSPLALSGGLMLLTALVV) threads the bilayer. The Cytoplasmic portion of the chain corresponds to 388–397 (AAKVRITPMS).

The protein belongs to the major facilitator superfamily. DHA1 family. NepI (TC 2.A.1.2.26) subfamily.

It localises to the cell inner membrane. The catalysed reaction is inosine(in) + H(+)(out) = inosine(out) + H(+)(in). The enzyme catalyses guanosine(in) + H(+)(out) = guanosine(out) + H(+)(in). Involved in the efflux of purine ribonucleosides, such as inosine and guanosine. This Salmonella choleraesuis (strain SC-B67) protein is Purine ribonucleoside efflux pump NepI.